The sequence spans 365 residues: Putative glutamate--cysteine ligase 2-2 (365 aa).

Belongs to the glutamate--cysteine ligase type 2 family. YbdK subfamily.

It catalyses the reaction L-cysteine + L-glutamate + ATP = gamma-L-glutamyl-L-cysteine + ADP + phosphate + H(+). ATP-dependent carboxylate-amine ligase which exhibits weak glutamate--cysteine ligase activity. In Mycolicibacterium vanbaalenii (strain DSM 7251 / JCM 13017 / BCRC 16820 / KCTC 9966 / NRRL B-24157 / PYR-1) (Mycobacterium vanbaalenii), this protein is Putative glutamate--cysteine ligase 2-2.